Consider the following 286-residue polypeptide: Prepilin leader peptidase/N-methyltransferase (286 aa).

Residues Leu11 to Ile31 form a helical membrane-spanning segment. Zn(2+) is bound by residues Cys74, Cys77, Cys99, and Cys102. The next 6 helical transmembrane spans lie at Ile106 to Phe126, Leu132 to Ala152, Leu161 to Leu181, Val185 to Ile205, Leu231 to Leu251, and Met257 to Ile277.

The protein belongs to the peptidase A24 family. Requires Zn(2+) as cofactor.

It is found in the cell inner membrane. It carries out the reaction Typically cleaves a -Gly-|-Phe- bond to release an N-terminal, basic peptide of 5-8 residues from type IV prepilin, and then N-methylates the new N-terminal amino group, the methyl donor being S-adenosyl-L-methionine.. Plays an essential role in type IV pili and type II pseudopili formation by proteolytically removing the leader sequence from substrate proteins and subsequently monomethylating the alpha-amino group of the newly exposed N-terminal phenylalanine. The protein is Prepilin leader peptidase/N-methyltransferase (fimP) of Dichelobacter nodosus (Bacteroides nodosus).